We begin with the raw amino-acid sequence, 482 residues long: MTDPSKNYVNGEWVTSETGETTEVTNPANPSEVVAAYQHSNENDAAAAVDAAVAAEDEWRNTPGPERGRILREAGTLLAQRKDELTEILTAEEGKARPEAAGEVQRAIDIFHYFSSKAADLGGTKKGASGPNTNLYTRQEPVGVAALITPWNYPIAIPAWKLAPALAAGNTVVLKPASIAPGVVIEIARALDEAGLPDGVLNVVTGPGSSVGSEFIGNEGTDLVSFTGSSQVGEMVYEQATDAGKRVQTELGGKNPTLVADSANPAEAADIVANGGFGTTGQSCTACSRAIVHEDVYDDFVAELVDRAESLDVGPGTDHEMGPQVSESELSSTLEYIDIAEAEGATLVAGGGVPEGEAVETGHFVEPTVFTDVDPDMRIAQEEVFGPVVAVIEVSDFDEGLAVANDVDYGLSASIVTDDHTEANRFVDEVEAGVVKVNDKTTGLELHVPFGGFKRSSSETWREQGDAGLDFYTIEKTVYDSY.

Residues 1 to 28 are disordered; that stretch reads MTDPSKNYVNGEWVTSETGETTEVTNPA. Residues 11–25 show a composition bias toward low complexity; the sequence is GEWVTSETGETTEVT. Cysteine 284 is a catalytic residue.

The protein belongs to the aldehyde dehydrogenase family. In terms of assembly, homotetramer.

The enzyme catalyses 2,5-dioxopentanoate + NADP(+) + H2O = 2-oxoglutarate + NADPH + 2 H(+). The protein operates within carbohydrate metabolism; D-xylose degradation. In terms of biological role, alpha-ketoglutarate semialdehyde dehydrogenase involved in the degradation of D-xylose, a major component of hemicelluloses such as xylan. Catalyzes the fifth reaction in the xylose utilization pathway through dehydratation of alpha-ketoglutarate semialdehyde (2,5-dioxopentanoate) into alpha-ketoglutarate. This chain is Alpha-ketoglutarate semialdehyde dehydrogenase, found in Haloferax volcanii (strain ATCC 29605 / DSM 3757 / JCM 8879 / NBRC 14742 / NCIMB 2012 / VKM B-1768 / DS2) (Halobacterium volcanii).